The following is a 131-amino-acid chain: Small ribosomal subunit protein uS8 (131 aa).

The protein belongs to the universal ribosomal protein uS8 family. As to quaternary structure, part of the 30S ribosomal subunit. Contacts proteins S5 and S12.

One of the primary rRNA binding proteins, it binds directly to 16S rRNA central domain where it helps coordinate assembly of the platform of the 30S subunit. In Dictyoglomus thermophilum (strain ATCC 35947 / DSM 3960 / H-6-12), this protein is Small ribosomal subunit protein uS8.